The sequence spans 247 residues: MLVLRSALTRALASRTLAPQMCSSFATGPRQYDGIFYEFRSYYLKPSKMNEFLENFEKNAHLRTAHSELVGYWSVEFGGRMNTVFHIWKYDNFAHRTEVRKALAKDKEWQEQFLIPNLALIDKQESEITYLVPWCKLEKPPKEGVYELATFQMKPGGPALWGDAFKRAVHAHVNLGYTKLVGVFHTEYGALNRVHVLWWNESADSRAAGRHKSHEDPRVVAAVRESVNYLVSQQNMLLIPTSFSPLK.

An N6-acetyllysine mark is found at Lys-48 and Lys-166.

This sequence belongs to the NipSnap family. As to quaternary structure, interacts with the Salmonella typhimurium virulence protein spiC. In terms of tissue distribution, ubiquitous. Highly expressed in liver, kidney and muscle. Expressed at intermediate level in brain, heart, colon, thymus, kidney, small intestine, placenta, lung, leukocytes and spleen.

It localises to the cytoplasm. It is found in the cytosol. The polypeptide is Protein NipSnap homolog 3A (NIPSNAP3A) (Homo sapiens (Human)).